We begin with the raw amino-acid sequence, 556 residues long: Testis-specific protein 10-interacting protein (556 aa).

A compositionally biased stretch (polar residues) spans 1–20; sequence MGQETNMLNAHQQLVRTSSG. 2 disordered regions span residues 1–102 and 180–320; these read MGQE…SPRK and CTSI…GPWD. Positions 75–85 are enriched in basic residues; sequence KDRRLRGRNKK. Composition is skewed to acidic residues over residues 213 to 225 and 246 to 260; these read EPEE…LGAE and LEEE…EAED. The span at 266 to 278 shows a compositional bias: basic residues; that stretch reads PWRRRTSSRRKGR. A compositionally biased stretch (basic and acidic residues) spans 304–320; the sequence is EPQRRKPRAKELEGPWD. Residues 387 to 463 are a coiled coil; that stretch reads LRAWELQQRE…ELQGIQHRVQ (77 aa). The tract at residues 503–556 is disordered; sequence AGKRDMEGAPRRHRSHRSVGARMEPSSQSPPKMEPTGSQADQHFAPNPDQELSP. Residues 527 to 543 show a composition bias toward polar residues; that stretch reads PSSQSPPKMEPTGSQAD.

This Bos taurus (Bovine) protein is Testis-specific protein 10-interacting protein (TSGA10IP).